The chain runs to 305 residues: 4-diphosphocytidyl-2-C-methyl-D-erythritol kinase (305 aa).

Lys17 is an active-site residue. ATP is bound at residue 111 to 121; sequence PVASGIGGGSA. Asp154 is a catalytic residue.

It belongs to the GHMP kinase family. IspE subfamily.

The catalysed reaction is 4-CDP-2-C-methyl-D-erythritol + ATP = 4-CDP-2-C-methyl-D-erythritol 2-phosphate + ADP + H(+). The protein operates within isoprenoid biosynthesis; isopentenyl diphosphate biosynthesis via DXP pathway; isopentenyl diphosphate from 1-deoxy-D-xylulose 5-phosphate: step 3/6. In terms of biological role, catalyzes the phosphorylation of the position 2 hydroxy group of 4-diphosphocytidyl-2C-methyl-D-erythritol. The chain is 4-diphosphocytidyl-2-C-methyl-D-erythritol kinase from Gluconacetobacter diazotrophicus (strain ATCC 49037 / DSM 5601 / CCUG 37298 / CIP 103539 / LMG 7603 / PAl5).